The sequence spans 456 residues: Phospholipase A1 member A (456 aa).

A signal peptide spans 1–25; it reads MPPGPWESCFWVGGLLLWLSVGSSG. Serine 166 (nucleophile) is an active-site residue. The active-site Charge relay system is the aspartate 190. A disulfide bridge connects residues cysteine 245 and cysteine 258. Histidine 260 serves as the catalytic Charge relay system. Disulfide bonds link cysteine 282/cysteine 293 and cysteine 296/cysteine 304. Residue asparagine 365 is glycosylated (N-linked (GlcNAc...) asparagine).

Belongs to the AB hydrolase superfamily. Lipase family.

The protein resides in the secreted. It carries out the reaction a 1,2-diacyl-sn-glycero-3-phospho-L-serine + H2O = a 2-acyl-sn-glycero-3-phospho-L-serine + a fatty acid + H(+). The catalysed reaction is 1,2-di-(9Z)-octadecenoyl-sn-glycero-3-phospho-L-serine + H2O = 2-(9Z-octadecenoyl)-sn-glycero-3-phospho-L-serine + (9Z)-octadecenoate + H(+). The enzyme catalyses 1-hexadecanoyl-2-(5Z,8Z,11Z,14Z-eicosatetraenoyl)-sn-glycero-3-phospho-L-serine + H2O = 2-(5Z,8Z,11Z,14Z)-eicosatetraenoyl-sn-glycero-3-phospho-L-serine + hexadecanoate + H(+). It catalyses the reaction a 1-acyl-sn-glycero-3-phospho-L-serine + H2O = sn-glycero-3-phospho-L-serine + a fatty acid + H(+). It carries out the reaction 1-(9Z-octadecenoyl)-sn-glycero-3-phospho-L-serine + H2O = sn-glycero-3-phospho-L-serine + (9Z)-octadecenoate + H(+). In terms of biological role, hydrolyzes the ester bond of the acyl group attached at the sn-1 position of phosphatidylserines (phospholipase A1 activity) and 1-acyl-2-lysophosphatidylserines (lysophospholipase activity) in the pathway of phosphatidylserines acyl chain remodeling. Cleaves phosphatidylserines exposed on the outer leaflet of the plasma membrane of apoptotic cells producing 2-acyl-1-lysophosphatidylserines, which in turn enhance mast cell activation and histamine production. Has no activity toward other glycerophospholipids including phosphatidylcholines, phosphatidylethanolamines, phosphatidic acids or phosphatidylinositols, or glycerolipids such as triolein. The polypeptide is Phospholipase A1 member A (PLA1A) (Pongo abelii (Sumatran orangutan)).